We begin with the raw amino-acid sequence, 201 residues long: Akirin-2 (201 aa).

Residues serine 18 and serine 21 each carry the phosphoserine modification. The Nuclear localization signal signature appears at 23 to 28 (KRRRCA). Position 55 is a phosphoserine (serine 55). Positions 198-201 (SYVS) match the SYVS motif motif.

It belongs to the akirin family. Homodimer. Interacts with IPO9; the interaction is direct. Associates with 20S and 26S proteasomes. Interacts with SMARCD1; promoting SWI/SNF complex recruitment. Interacts with NFKBIZ. Interacts with YWHAB. In terms of processing, polyubiquitinated. Polyubiquitination is dependent of UBR5 that extends pre-ubiquitinated AKIRIN2.

It localises to the nucleus. Its subcellular location is the cytoplasm. It is found in the membrane. Functionally, molecular adapter that acts as a bridge between a variety of multiprotein complexes, and which is involved in embryonic development, immunity, myogenesis and brain development. Plays a key role in nuclear protein degradation by promoting import of proteasomes into the nucleus: directly binds to fully assembled 20S proteasomes at one end and to nuclear import receptor IPO9 at the other end, bridging them together and mediating the import of pre-assembled proteasome complexes through the nuclear pore. Involved in innate immunity by regulating the production of interleukin-6 (IL6) downstream of Toll-like receptor (TLR): acts by bridging the NF-kappa-B inhibitor NFKBIZ and the SWI/SNF complex, leading to promote induction of IL6. Also involved in adaptive immunity by promoting B-cell activation. Involved in brain development: required for the survival and proliferation of cerebral cortical progenitor cells. Involved in myogenesis: required for skeletal muscle formation and skeletal development, possibly by regulating expression of muscle differentiation factors. Also plays a role in facilitating interdigital tissue regression during limb development. The polypeptide is Akirin-2 (Mus musculus (Mouse)).